Reading from the N-terminus, the 476-residue chain is Adenosylhomocysteinase (476 aa).

Residues Thr67, Asp142, and Glu202 each contribute to the substrate site. NAD(+) is bound at residue 203–205 (TTT). The substrate site is built by Lys232 and Asp236. NAD(+) contacts are provided by residues Asn237, 266 to 271 (GYGDVG), Glu289, Asn324, 345 to 347 (IGH), and Asn390.

The protein belongs to the adenosylhomocysteinase family. The cofactor is NAD(+).

The protein localises to the cytoplasm. It carries out the reaction S-adenosyl-L-homocysteine + H2O = L-homocysteine + adenosine. Its pathway is amino-acid biosynthesis; L-homocysteine biosynthesis; L-homocysteine from S-adenosyl-L-homocysteine: step 1/1. Functionally, may play a key role in the regulation of the intracellular concentration of adenosylhomocysteine. This is Adenosylhomocysteinase from Synechococcus sp. (strain CC9605).